Consider the following 1116-residue polypeptide: Rho GTPase-activating protein 45 (1116 aa).

The tract at residues 1–72 (MFSRKKRELM…RPTSLSRHAS (72 aa)) is disordered. Over residues 22-31 (GSPNPQSSSG) the composition is skewed to polar residues. Phosphoserine is present on residues Ser-23, Ser-72, Ser-92, and Ser-98. The region spanning 268 to 538 (EEVDMLLQRC…SSKLYDPGQQ (271 aa)) is the F-BAR domain. Positions 375–498 (EHERRRKEIK…QIQEVIRQSD (124 aa)) form a coiled coil. The interval 422 to 457 (VAKAEEEQQGTGPGAGTAASKALDKRRRLEEEAKNK) is disordered. Basic and acidic residues predominate over residues 448-457 (RRLEEEAKNK). Residues Ser-568, Ser-577, Ser-591, and Ser-618 each carry the phosphoserine modification. The tract at residues 569-658 (PIMRTRKGSF…MSSSEELGDQ (90 aa)) is disordered. The segment covering 621–635 (ISISDTEVGLDTSSG) has biased composition (polar residues). The segment covering 643 to 652 (TSSSGTMSSS) has biased composition (low complexity). The segment at 699 to 744 (THRLRKLRTPAKCRECNSYVYFQGAECEECCLACHKKCLETLAIQC) adopts a Phorbol-ester/DAG-type zinc-finger fold. One can recognise a Rho-GAP domain in the interval 758–971 (QDFSQAALST…TLIVHYGLVF (214 aa)). 4 positions are modified to phosphoserine: Ser-946, Ser-1017, Ser-1020, and Ser-1022. Disordered regions lie at residues 1004 to 1035 (EEAE…SSSD) and 1050 to 1116 (AGLE…PQFV). Composition is skewed to polar residues over residues 1080–1090 (FNTNQSNNTSR) and 1105–1116 (GGTSQERQPQFV).

It localises to the cytoplasm. It is found in the cell projection. The protein localises to the ruffle membrane. In terms of biological role, contains a GTPase activator for the Rho-type GTPases (RhoGAP) domain that would be able to negatively regulate the actin cytoskeleton as well as cell spreading. However, also contains N-terminally a BAR-domin which is able to play an autoinhibitory effect on this RhoGAP activity. In Mus musculus (Mouse), this protein is Rho GTPase-activating protein 45.